The following is a 565-amino-acid chain: uncharacterized protein (565 aa).

Helical transmembrane passes span 4 to 26 (FVQF…AVWV), 33 to 55 (GYGL…VGAA), 68 to 90 (SLLY…VNAL), 97 to 119 (YAIL…TQFF), and 162 to 184 (ISAM…IILL). RCK C-terminal domains lie at 210–295 (PNVD…LGPE) and 296–379 (VPDA…IFGV). The next 5 helical transmembrane spans lie at 389–411 (LLTL…PAFG), 415–432 (GLGN…VSSI), 453–472 (LGLI…DLLT), 482–504 (IFIV…GFHI), and 539–561 (WLGF…YFAM).

It belongs to the AAE transporter (TC 2.A.81) family.

It is found in the cell membrane. This is an uncharacterized protein from Bordetella parapertussis (strain 12822 / ATCC BAA-587 / NCTC 13253).